Consider the following 122-residue polypeptide: Large ribosomal subunit protein bL19 (122 aa).

It belongs to the bacterial ribosomal protein bL19 family.

Its function is as follows. This protein is located at the 30S-50S ribosomal subunit interface and may play a role in the structure and function of the aminoacyl-tRNA binding site. The sequence is that of Large ribosomal subunit protein bL19 from Novosphingobium aromaticivorans (strain ATCC 700278 / DSM 12444 / CCUG 56034 / CIP 105152 / NBRC 16084 / F199).